Here is a 148-residue protein sequence, read N- to C-terminus: MEHTFIMIKPDGVQRGLVGEIIGRFEKKGFSLKGLKLLTVDQAFAEKHYADLSAKPFFNGLVEYIISGPVVAMVWEGKNVVTTGRKIIGATNPAESAPGTIRGDFAIDIGRNVIHGSDAVESAKKEIALWFPEGVANWSSSLHPWIYE.

The ATP site is built by Lys9, Phe57, Arg85, Thr91, Arg102, and Asn112. Residue His115 is the Pros-phosphohistidine intermediate of the active site.

Belongs to the NDK family. It depends on Mg(2+) as a cofactor.

It catalyses the reaction a 2'-deoxyribonucleoside 5'-diphosphate + ATP = a 2'-deoxyribonucleoside 5'-triphosphate + ADP. The enzyme catalyses a ribonucleoside 5'-diphosphate + ATP = a ribonucleoside 5'-triphosphate + ADP. In terms of biological role, major role in the synthesis of nucleoside triphosphates other than ATP. The ATP gamma phosphate is transferred to the NDP beta phosphate via a ping-pong mechanism, using a phosphorylated active-site intermediate. This chain is Nucleoside diphosphate kinase B, found in Flaveria bidentis (Coastal plain yellowtops).